Here is a 325-residue protein sequence, read N- to C-terminus: MRIRKNITKFIKRAYIDMGELKQVKGYTKTRLNIISNKVFLLKQELYPLKKQKKVGKLKKKRVTTYTRKKLKRILSLLFRIGGKIYRRKIKKKKINLKKKEEHFTNNLILYRLFRKFYINLKLKQFKRLYKKYKGNEKIIIQQLEKRIDMILLRSGFVRSIYEARQLINHKHILVNGNIARIPSYTLNVGDIISIKEGSHKQNLIHRLKKILLPKVVPEHKKNLIHRFVSKGMDKYKYNYKQKYQPNDKAKYQQNYKYQAKRRRESKKKRRIRATGPKYLEISHALLLISLIEEPKLTAIKYPFTLQPENNIKFISLLNKYKRIR.

The 64-residue stretch at 146 to 209 folds into the S4 RNA-binding domain; that stretch reads KRIDMILLRS…HKQNLIHRLK (64 aa).

The protein belongs to the universal ribosomal protein uS4 family.

Its subcellular location is the mitochondrion. The chain is Small ribosomal subunit protein uS4m (mrps4) from Dictyostelium citrinum (Slime mold).